The sequence spans 291 residues: tRNA dimethylallyltransferase (291 aa).

5 to 12 lines the ATP pocket; the sequence is GPTAGGKS. 7 to 12 lines the substrate pocket; sequence TAGGKS. The interval 30–33 is interaction with substrate tRNA; it reads DSMQ.

The protein belongs to the IPP transferase family. In terms of assembly, monomer. It depends on Mg(2+) as a cofactor.

It carries out the reaction adenosine(37) in tRNA + dimethylallyl diphosphate = N(6)-dimethylallyladenosine(37) in tRNA + diphosphate. Catalyzes the transfer of a dimethylallyl group onto the adenine at position 37 in tRNAs that read codons beginning with uridine, leading to the formation of N6-(dimethylallyl)adenosine (i(6)A). This is tRNA dimethylallyltransferase from Frankia casuarinae (strain DSM 45818 / CECT 9043 / HFP020203 / CcI3).